We begin with the raw amino-acid sequence, 150 residues long: Arginine repressor (150 aa).

The protein belongs to the ArgR family.

It is found in the cytoplasm. Its pathway is amino-acid biosynthesis; L-arginine biosynthesis [regulation]. Functionally, regulates arginine biosynthesis genes. The sequence is that of Arginine repressor from Psychromonas ingrahamii (strain DSM 17664 / CCUG 51855 / 37).